The primary structure comprises 203 residues: Recombination protein RecR (203 aa).

Residues 56–71 (CAVCGNVSDNERCRIC) form a C4-type zinc finger. The region spanning 79–179 (SVVCIVEEPK…TVTRIASGLP (101 aa)) is the Toprim domain.

Belongs to the RecR family.

May play a role in DNA repair. It seems to be involved in an RecBC-independent recombinational process of DNA repair. It may act with RecF and RecO. This chain is Recombination protein RecR, found in Mycobacterium bovis (strain ATCC BAA-935 / AF2122/97).